A 361-amino-acid chain; its full sequence is tRNA/tmRNA (uracil-C(5))-methyltransferase (361 aa).

Residues glutamine 183, tyrosine 211, asparagine 216, glutamate 232, and aspartate 294 each coordinate S-adenosyl-L-methionine. Cysteine 319 serves as the catalytic Nucleophile. The active-site Proton acceptor is glutamate 353.

It belongs to the class I-like SAM-binding methyltransferase superfamily. RNA M5U methyltransferase family. TrmA subfamily.

The enzyme catalyses uridine(54) in tRNA + S-adenosyl-L-methionine = 5-methyluridine(54) in tRNA + S-adenosyl-L-homocysteine + H(+). It catalyses the reaction uridine(341) in tmRNA + S-adenosyl-L-methionine = 5-methyluridine(341) in tmRNA + S-adenosyl-L-homocysteine + H(+). Its function is as follows. Dual-specificity methyltransferase that catalyzes the formation of 5-methyluridine at position 54 (m5U54) in all tRNAs, and that of position 341 (m5U341) in tmRNA (transfer-mRNA). The sequence is that of tRNA/tmRNA (uracil-C(5))-methyltransferase from Acinetobacter baylyi (strain ATCC 33305 / BD413 / ADP1).